We begin with the raw amino-acid sequence, 417 residues long: S-adenosylmethionine synthase (417 aa).

Histidine 16 is an ATP binding site. Aspartate 18 provides a ligand contact to Mg(2+). Glutamate 44 provides a ligand contact to K(+). L-methionine-binding residues include glutamate 57 and glutamine 100. A flexible loop region spans residues 100 to 110 (QSPDIAQGVDT). ATP-binding positions include 175 to 177 (DGK), 251 to 252 (KF), aspartate 260, 266 to 267 (RK), alanine 283, and lysine 287. Position 260 (aspartate 260) interacts with L-methionine. Lysine 291 provides a ligand contact to L-methionine.

It belongs to the AdoMet synthase family. In terms of assembly, homotetramer; dimer of dimers. Mg(2+) is required as a cofactor. The cofactor is K(+).

It localises to the cytoplasm. The catalysed reaction is L-methionine + ATP + H2O = S-adenosyl-L-methionine + phosphate + diphosphate. Its pathway is amino-acid biosynthesis; S-adenosyl-L-methionine biosynthesis; S-adenosyl-L-methionine from L-methionine: step 1/1. Catalyzes the formation of S-adenosylmethionine (AdoMet) from methionine and ATP. The overall synthetic reaction is composed of two sequential steps, AdoMet formation and the subsequent tripolyphosphate hydrolysis which occurs prior to release of AdoMet from the enzyme. The polypeptide is S-adenosylmethionine synthase (Synechococcus elongatus (strain ATCC 33912 / PCC 7942 / FACHB-805) (Anacystis nidulans R2)).